A 374-amino-acid chain; its full sequence is Phosphate acyltransferase (374 aa).

It belongs to the PlsX family. In terms of assembly, homodimer. Probably interacts with PlsY.

Its subcellular location is the cytoplasm. It catalyses the reaction a fatty acyl-[ACP] + phosphate = an acyl phosphate + holo-[ACP]. It functions in the pathway lipid metabolism; phospholipid metabolism. In terms of biological role, catalyzes the reversible formation of acyl-phosphate (acyl-PO(4)) from acyl-[acyl-carrier-protein] (acyl-ACP). This enzyme utilizes acyl-ACP as fatty acyl donor, but not acyl-CoA. This chain is Phosphate acyltransferase, found in Gluconacetobacter diazotrophicus (strain ATCC 49037 / DSM 5601 / CCUG 37298 / CIP 103539 / LMG 7603 / PAl5).